Reading from the N-terminus, the 628-residue chain is MQANIKWLDDPEIFRVNQLPAHSDHPFFKNYREWQNNHSSFKQSLNGMWQFKFSKDPQSRPVDFYKKDFNTSSFTTIPVPSEIELNNFAQNQYINTLYPWEGKIFRRPAYALNKSDAEEGSFSEGKDNTVGSYIKHFDLNPELRDHDIHIVFEGAERAMYVWLNGHFIGYAEDSFTPSEFDLTKYIKEKDNILAVEVFKHSTASWLEDQDMFRFSGLFRSVELLAFPETHLVDLDLKPTVCDNYQDGIFNAELKFTGSLNGHVHLSVEDVNGSAILEQDVPLDSEVEFTSSTLENIHLWDNHHPYLYQLLIEVHDENGHLVELIPYQFGFRRIEINQDKVILLNGKCLIINGVNRHEWNAKTGRSITLNDMEKDIDTFKENNINAVRTCHYPNQIPWYYLCDQNGIYMMAENNLESHGTWQKMGQVEPSDNVPGSVPEWREAVIDRARNNYETFKNHTSILFWSLGNESYAGSNIVAMNEFYKEHDSSRLVHYEGVVHRPELKDQISDIESHMYLPPKEVAEYLRNNPQKPFMECEYMHDMGNSDGGMGSYIKLIDEYPQYVGGFIWDFIDQALLVYDPISKQNVLRYGGDFDDRHSDYEFSGDGLMFADRTPKPAMQEVRYYYGLHK.

E468 acts as the Proton donor in catalysis. The active-site Nucleophile is the E536.

It belongs to the glycosyl hydrolase 2 family. In terms of assembly, heterodimer of a large (LacL) and a small subunit (LacM).

The catalysed reaction is Hydrolysis of terminal non-reducing beta-D-galactose residues in beta-D-galactosides.. Functionally, component of a beta-galactosidase. This Lactobacillus acidophilus (strain ATCC 700396 / NCK56 / N2 / NCFM) protein is Beta-galactosidase large subunit (lacL).